Here is a 505-residue protein sequence, read N- to C-terminus: Flagellin (505 aa).

This sequence belongs to the bacterial flagellin family.

It is found in the secreted. The protein resides in the bacterial flagellum. Its function is as follows. Flagellin is the subunit protein which polymerizes to form the filaments of bacterial flagella. This is Flagellin (fliC) from Salmonella senftenberg.